Consider the following 572-residue polypeptide: Sialate:O-sulfotransferase 1 (572 aa).

The Cytoplasmic portion of the chain corresponds to 1 to 14 (MAKPFFRLQKFLRR). A helical; Signal-anchor for type II membrane protein transmembrane segment spans residues 15–35 (TQFLLLFLTAAYLMTGSLLLL). Residues 36–572 (QRARVALPQA…AGLPREYVPR (537 aa)) lie on the Extracellular side of the membrane. Asn105 is a glycosylation site (N-linked (GlcNAc...) asparagine). WSC domains lie at 139 to 231 (RGNY…YSVG) and 242 to 337 (TATY…DTRC). Asn254 is a glycosylation site (N-linked (GlcNAc...) asparagine).

This sequence belongs to the WSCD family.

It is found in the golgi apparatus membrane. The catalysed reaction is a ganglioside GM1b + 3'-phosphoadenylyl sulfate = an 8-O-sulfo-ganglioside GM1b + adenosine 3',5'-bisphosphate + H(+). Sialate:O-sulfotransferase which catalyzes 8-O-sulfation at the Sia-glycan level using 3'-phosphoadenosine 5'-phosphosulfate (PAPS) as a donor, forming 8-O-sulfated Sia (Sia8S)-glycans. Displays selectivity toward glycolipids such as GM1 gangliosides. The protein is Sialate:O-sulfotransferase 1 (Wscd1) of Mus musculus (Mouse).